Reading from the N-terminus, the 164-residue chain is UPF0304 protein YfbU (164 aa).

Belongs to the UPF0304 family.

In Shigella flexneri serotype 5b (strain 8401), this protein is UPF0304 protein YfbU.